We begin with the raw amino-acid sequence, 456 residues long: Histidinol dehydrogenase homolog (456 aa).

His279 contributes to the Zn(2+) binding site. Active-site proton acceptor residues include Glu347 and His348. His440 lines the Zn(2+) pocket.

Belongs to the histidinol dehydrogenase family. Zn(2+) serves as cofactor.

This Rhizobium meliloti (strain 1021) (Ensifer meliloti) protein is Histidinol dehydrogenase homolog.